Consider the following 531-residue polypeptide: ATP synthase subunit beta (531 aa).

The interval Met-1–Lys-48 is disordered. Residues Ser-19–Val-29 show a composition bias toward basic residues. Residues Ser-30 to His-44 are compositionally biased toward polar residues. Residue Gly-203 to Thr-210 coordinates ATP.

The protein belongs to the ATPase alpha/beta chains family. F-type ATPases have 2 components, CF(1) - the catalytic core - and CF(0) - the membrane proton channel. CF(1) has five subunits: alpha(3), beta(3), gamma(1), delta(1), epsilon(1). CF(0) has three main subunits: a(1), b(2) and c(9-12). The alpha and beta chains form an alternating ring which encloses part of the gamma chain. CF(1) is attached to CF(0) by a central stalk formed by the gamma and epsilon chains, while a peripheral stalk is formed by the delta and b chains.

Its subcellular location is the cell inner membrane. It carries out the reaction ATP + H2O + 4 H(+)(in) = ADP + phosphate + 5 H(+)(out). Its function is as follows. Produces ATP from ADP in the presence of a proton gradient across the membrane. The catalytic sites are hosted primarily by the beta subunits. The chain is ATP synthase subunit beta from Bartonella henselae (strain ATCC 49882 / DSM 28221 / CCUG 30454 / Houston 1) (Rochalimaea henselae).